The primary structure comprises 932 residues: Progesterone receptor (932 aa).

The tract at residues 1–164 is AF3; mediates transcriptional activation; sequence MTELKAKGPR…PATQGVLSPL (164 aa). Positions 1-254 are disordered; sequence MTELKAKGPR…GGAAAGGAAA (254 aa). Residues 1-565 are modulating, Pro-Rich; it reads MTELKAKGPR…YSFESLPQKI (565 aa). Ser-20 is subject to Phosphoserine. An LXXL motif 1 motif is present at residues 55-59; it reads LDGLL. A Phosphoserine modification is found at Ser-81. Residues 88-103 are compositionally biased toward low complexity; it reads SRAEATRGAGGSSSSP. An LXXL motif 2 motif is present at residues 115–119; sequence LDTLL. Ser-130 and Ser-162 each carry phosphoserine. A mediates transcriptional transrepression region spans residues 165–304; the sequence is MSRSGGKAGD…LATTVMDFIH (140 aa). Positions 183-187 match the Nuclear localization signal motif; sequence KVLPQ. A phosphoserine mark is found at Ser-190 and Ser-213. The span at 220–231 shows a compositional bias: acidic residues; the sequence is EVEEEDGSESED. A compositionally biased stretch (low complexity) spans 232-254; that stretch reads SAGPLLKGKPRALGGAAAGGAAA. Ser-293 carries the post-translational modification Phosphoserine; by MAPK1. Low complexity predominate over residues 334-349; sequence AASAFAPPRSSPSASS. Positions 334–356 are disordered; that stretch reads AASAFAPPRSSPSASSTPVAVGD. Phosphoserine; by MAPK is present on Ser-344. Lys-387 is covalently cross-linked (Glycyl lysine isopeptide (Lys-Gly) (interchain with G-Cter in SUMO); alternate). A Glycyl lysine isopeptide (Lys-Gly) (interchain with G-Cter in ubiquitin); alternate cross-link involves residue Lys-387. Disordered stretches follow at residues 414–451 and 468–499; these read PDFPLGPPPPLPPRAPPSRPGEAAVTAAPASASVSSAS and PPQQGPFAPPPSKAPGAGGCLPPRDGLPSTAA. A compositionally biased stretch (pro residues) spans 417–432; sequence PLGPPPPLPPRAPPSR. Low complexity predominate over residues 433–451; the sequence is PGEAAVTAAPASASVSSAS. The segment at 455-545 is AF1; mediates transcriptional activation; sequence STLECILYKA…VYPPYLNYLR (91 aa). Pro residues predominate over residues 470–480; that stretch reads QQGPFAPPPSK. Lys-530 participates in a covalent cross-link: Glycyl lysine isopeptide (Lys-Gly) (interchain with G-Cter in SUMO). NR C4-type zinc fingers lie at residues 566-586 and 602-626; these read CLICGDEASGCHYGVLTCGSC and CAGRNDCIVDKIRRKNCPACRLRKC. Positions 566–638 form a DNA-binding region, nuclear receptor; sequence CLICGDEASG…AGMVLGGRKF (73 aa). Ser-675 is subject to Phosphoserine. The 235-residue stretch at 678-912 folds into the NR LBD domain; it reads QDIQLIPPLI…EFPEMMSEVI (235 aa). An AF2; mediates transcriptional activation region spans residues 686–932; it reads LINLLMSIEP…MVKPLLFHKK (247 aa). Arg-765 is a progesterone binding site.

The protein belongs to the nuclear hormone receptor family. As to quaternary structure, interacts with SMARD1 and UNC45A. Interacts with CUEDC2; the interaction promotes ubiquitination, decreases sumoylation, and represses transcriptional activity. Interacts with PIAS3; the interaction promotes sumoylation of PR in a hormone-dependent manner, inhibits DNA-binding, and alters nuclear export. Interacts with SP1; the interaction requires ligand-induced phosphorylation on Ser-344 by ERK1/2-MAPK. Interacts with PRMT2. Interacts with NCOA2 and NCOA1. Interacts with KLF9. Interacts with GTF2B. In terms of processing, phosphorylated on multiple serine sites. Several of these sites are hormone-dependent. Phosphorylation on Ser-293 is highly hormone-dependent and modulates ubiquitination and sumoylation on Lys-387. Phosphorylation on Ser-102 and Ser-344 also requires induction by hormone. Basal phosphorylation on Ser-81, Ser-162 and Ser-190 is increased in response to progesterone and can be phosphorylated in vitro by the CDK2-A1 complex. Phosphorylation at Ser-162 and Ser-293, but not at Ser-190, is impaired during the G(2)/M phase of the cell cycle. Phosphorylation on Ser-344 by ERK1/2 MAPK is required for interaction with SP1. Sumoylation is hormone-dependent and represses transcriptional activity. Sumoylation on all three sites is enhanced by PIAS3. Desumoylated by SENP1. Sumoylation on Lys-387, the main site of sumoylation, is repressed by ubiquitination on the same site, and modulated by phosphorylation at Ser-293. Post-translationally, ubiquitination is hormone-dependent and represses sumoylation on the same site. Promoted by MAPK-mediated phosphorylation on Ser-293. Ubiquitinated by UBR5, leading to its degradation: UBR5 specifically recognizes and binds ligand-bound PGR when it is not associated with coactivators (NCOAs). In presence of NCOAs, the UBR5-degron is not accessible, preventing its ubiquitination and degradation. In terms of processing, palmitoylated by ZDHHC7 and ZDHHC21. Palmitoylation is required for plasma membrane targeting and for rapid intracellular signaling via ERK and AKT kinases and cAMP generation.

It is found in the nucleus. The protein resides in the cytoplasm. In terms of biological role, the steroid hormones and their receptors are involved in the regulation of eukaryotic gene expression and affect cellular proliferation and differentiation in target tissues. Transcriptional activator of several progesteron-dependent promoters in a variety of cell types. Involved in activation of SRC-dependent MAPK signaling on hormone stimulation. In Hylobates lar (Lar gibbon), this protein is Progesterone receptor (PGR).